We begin with the raw amino-acid sequence, 840 residues long: Probable alpha-glucuronidase A (840 aa).

The signal sequence occupies residues 1 to 19 (MWSGIPIFALLSSIGIAAA). Asparagine 50, asparagine 149, asparagine 222, asparagine 262, asparagine 279, asparagine 310, asparagine 465, asparagine 527, asparagine 576, asparagine 610, asparagine 682, asparagine 723, and asparagine 732 each carry an N-linked (GlcNAc...) asparagine glycan.

The protein belongs to the glycosyl hydrolase 67 family.

It localises to the secreted. The catalysed reaction is an alpha-D-glucuronoside + H2O = D-glucuronate + an alcohol. Alpha-glucuronidase involved in the hydrolysis of xylan, a major structural heterogeneous polysaccharide found in plant biomass representing the second most abundant polysaccharide in the biosphere, after cellulose. Releases 4-O-methylglucuronic acid from xylan. In Aspergillus fumigatus (strain ATCC MYA-4609 / CBS 101355 / FGSC A1100 / Af293) (Neosartorya fumigata), this protein is Probable alpha-glucuronidase A (aguA).